We begin with the raw amino-acid sequence, 107 residues long: EIVLTQSPAITAASLGQKVTITCSASSSVSYMHWYQQKSGTSPKPWIYEISKLASGVPARFSGSGSGTSYSLTISSMEAEDAAIYYCQQWNYPLWTFGGGTKLEIKR.

The framework-1 stretch occupies residues 1-23 (EIVLTQSPAITAASLGQKVTITC). Residues C23 and C87 are joined by a disulfide bond. Positions 24–33 (SASSSVSYMH) are complementarity-determining-1. Residues 34-48 (WYQQKSGTSPKPWIY) form a framework-2 region. Residues 49 to 55 (EISKLAS) are complementarity-determining-2. Residues 56–87 (GVPARFSGSGSGTSYSLTISSMEAEDAAIYYC) form a framework-3 region. The interval 88-96 (QQWNYPLWT) is complementarity-determining-3. A framework-4 region spans residues 97 to 106 (FGGGTKLEIK).

The sequence is that of Ig kappa chain V-VI region XRPC 44 from Mus musculus (Mouse).